The chain runs to 271 residues: Serine O-acetyltransferase (271 aa).

Residue C112 is the Acyl-thioester intermediate of the active site. H204 (proton acceptor) is an active-site residue. Residue E206 is part of the active site.

It belongs to the MetA family.

It catalyses the reaction L-serine + acetyl-CoA = O-acetyl-L-serine + CoA. The protein operates within amino-acid biosynthesis; L-cysteine biosynthesis; L-cysteine from L-serine: step 1/2. Its function is as follows. Catalyzes the formation of O-acetylserine (OAS) from L-serine and acetyl-CoA. To a lesser extent, is also able to use succinyl-CoA and propionyl-CoA as acyl donors, but not butyryl-CoA. Does not acylate D-serine and L-homoserine. This is Serine O-acetyltransferase from Lacticaseibacillus casei (Lactobacillus casei).